The following is a 1347-amino-acid chain: Protein HUA2-LIKE 3 (1347 aa).

In terms of domain architecture, PWWP spans Val-24 to Glu-81. 3 disordered regions span residues Lys-110–Leu-137, Asp-251–Lys-320, and Asp-383–Glu-402. The span at Thr-127–Leu-137 shows a compositional bias: polar residues. Over residues Val-302–Gly-314 the composition is skewed to low complexity. A compositionally biased stretch (basic and acidic residues) spans Asn-390–Glu-402. Positions Asp-845–Ser-986 constitute a CID domain. Disordered stretches follow at residues Arg-1037 to Ser-1069, Thr-1121 to Gln-1140, Tyr-1147 to Met-1223, and Arg-1259 to Arg-1347. The segment covering Asp-1038 to Asp-1049 has biased composition (acidic residues). Basic and acidic residues predominate over residues Thr-1054–Ser-1069. Over residues Pro-1181–Lys-1191 the composition is skewed to polar residues. Residues Ser-1208–Ser-1217 are compositionally biased toward pro residues. Basic and acidic residues predominate over residues Arg-1259–Arg-1272.

Expressed throughout young primordia, and vegetative and reproductive apices.

Its subcellular location is the nucleus. Probable transcription factor that acts with partial redundancy with HULK1 and HULK2. Plays diverse and essential roles in the control of plant development, physiology and flowering time. The polypeptide is Protein HUA2-LIKE 3 (Arabidopsis thaliana (Mouse-ear cress)).